Consider the following 866-residue polypeptide: Autophagy-related protein 9 (866 aa).

Over 1–94 the chain is Cytoplasmic; it reads MMSSGHKGPN…KGLWCIIVKW (94 aa). A helical membrane pass occupies residues 95 to 115; the sequence is AVELLSLGFIICFSGFFLLYV. Residues 116 to 153 lie on the Lumenal side of the membrane; sequence DWNGLQNAKCGMDAVESGTKPCDLVKEAIHPHPLSPFT. Residues 154-174 form a helical membrane-spanning segment; it reads LTTAIIVGYLALFSVYWLFCF. The Cytoplasmic portion of the chain corresponds to 175–319; that stretch reads LRFFAQLKDT…VSNPTTLKKR (145 aa). An intramembrane segment occupies 320-340; it reads LFVVGLAMLLLSPFLVIFMLV. The Cytoplasmic portion of the chain corresponds to 341-404; the sequence is YLFLRHAEQF…LKQFPSPIIS (64 aa). A helical membrane pass occupies residues 405-425; the sequence is IIAKFVSFVSGGFAAVLIIIA. The Lumenal segment spans residues 426 to 433; that stretch reads FLEESLLE. The chain crosses the membrane as a helical span at residues 434 to 454; it reads GHIFGRNLFWYAAVFGTITAI. Residues 455-507 lie on the Cytoplasmic side of the membrane; sequence SRAAISDELLVLDPVGTMSLVVQNTHYMPKRWRGKENKDDVRLELETLFQYTG. An intramembrane segment occupies 508 to 528; the sequence is MMLLEEIASIFITPFLLMFVV. The Cytoplasmic portion of the chain corresponds to 529-866; sequence PKRVDDILQF…ETSTSSTTLR (338 aa). The interval 744–781 is disordered; the sequence is QPEGEDSYGSQHPLDGRNQWWGRGNHSQISTAHPATTN. Positions 768-781 are enriched in polar residues; it reads NHSQISTAHPATTN.

This sequence belongs to the ATG9 family. In terms of assembly, homotrimer; forms a homotrimer with a central pore that forms a path between the two membrane leaflets. In terms of tissue distribution, expressed in roots, leaves, stems and flowers.

It is found in the preautophagosomal structure membrane. Its function is as follows. Phospholipid scramblase involved in autophagy by mediating autophagosomal membrane expansion. Cycles between the preautophagosomal structure/phagophore assembly site (PAS) and the cytoplasmic vesicle pool and supplies membrane for the growing autophagosome. Lipid scramblase activity plays a key role in preautophagosomal structure/phagophore assembly by distributing the phospholipids that arrive through ATG2 from the cytoplasmic to the luminal leaflet of the bilayer, thereby driving autophagosomal membrane expansion. In addition to autophagy, also plays a role in necrotic cell death. Plays an essential role in plant nutrient recycling. The protein is Autophagy-related protein 9 of Arabidopsis thaliana (Mouse-ear cress).